Reading from the N-terminus, the 361-residue chain is POU domain, class 3, transcription factor 4 (361 aa).

Disordered regions lie at residues 99-131 (PHVA…GQPL) and 144-192 (MLEH…PTSD). The span at 119 to 131 (APNSSITSSGQPL) shows a compositional bias: polar residues. Residues 165 to 183 (VLREPPDHGELGSHHCQDH) are compositionally biased toward basic and acidic residues. One can recognise a POU-specific domain in the interval 186–260 (EETPTSDELE…LLNKWLEEAD (75 aa)). Phosphoserine is present on S265. Residues 278–337 (KRKKRTSIEVSVKGVLETHFLKCPKPAAQEISSLADSLQLEKEVVRVWFCNRRQKEKRMT) constitute a DNA-binding region (homeobox). The disordered stretch occupies residues 334–361 (KRMTPPGDQQPHEVYSHTVKTDASCHDL). Residues 343 to 361 (QPHEVYSHTVKTDASCHDL) are compositionally biased toward basic and acidic residues.

Belongs to the POU transcription factor family. Class-3 subfamily. As to quaternary structure, interacts with HNRNPU. Brain specific.

It is found in the nucleus. Its function is as follows. Probable transcription factor which exert its primary action widely during early neural development and in a very limited set of neurons in the mature brain. The chain is POU domain, class 3, transcription factor 4 (Pou3f4) from Mus musculus (Mouse).